A 248-amino-acid polypeptide reads, in one-letter code: Orotidine 5'-phosphate decarboxylase (248 aa).

Residues D22, K44, 71 to 80 (DLKFHDIPNT), T131, R192, Q201, G221, and R222 contribute to the substrate site. The active-site Proton donor is K73.

Belongs to the OMP decarboxylase family. Type 1 subfamily. In terms of assembly, homodimer.

It carries out the reaction orotidine 5'-phosphate + H(+) = UMP + CO2. Its pathway is pyrimidine metabolism; UMP biosynthesis via de novo pathway; UMP from orotate: step 2/2. Catalyzes the decarboxylation of orotidine 5'-monophosphate (OMP) to uridine 5'-monophosphate (UMP). The protein is Orotidine 5'-phosphate decarboxylase of Photorhabdus laumondii subsp. laumondii (strain DSM 15139 / CIP 105565 / TT01) (Photorhabdus luminescens subsp. laumondii).